Consider the following 258-residue polypeptide: Tryptophan synthase alpha chain (258 aa).

Catalysis depends on proton acceptor residues Glu47 and Asp58.

It belongs to the TrpA family. As to quaternary structure, tetramer of two alpha and two beta chains.

It carries out the reaction (1S,2R)-1-C-(indol-3-yl)glycerol 3-phosphate + L-serine = D-glyceraldehyde 3-phosphate + L-tryptophan + H2O. Its pathway is amino-acid biosynthesis; L-tryptophan biosynthesis; L-tryptophan from chorismate: step 5/5. Functionally, the alpha subunit is responsible for the aldol cleavage of indoleglycerol phosphate to indole and glyceraldehyde 3-phosphate. The polypeptide is Tryptophan synthase alpha chain (Bacillus cereus (strain AH820)).